Here is a 336-residue protein sequence, read N- to C-terminus: Flavonol synthase/flavanone 3-hydroxylase (336 aa).

A disordered region spans residues 99–118 (EKESVAKPEDSKDIEGYGTK). Residues 196 to 296 (MAEYMMKINY…RMSWPVFLEP (101 aa)) form the Fe2OG dioxygenase domain. 204–206 (NYY) lines the 2-oxoglutarate pocket. Fe cation contacts are provided by His221, Asp223, and His277. 287–289 (RMS) lines the 2-oxoglutarate pocket.

The protein belongs to the iron/ascorbate-dependent oxidoreductase family. It depends on L-ascorbate as a cofactor. Fe(2+) serves as cofactor. As to expression, expressed in young seedlings (at protein level). Expressed in roots, emerging leaves, shoot-root transition zone, trichomes, flowers and siliques. In cotyledons, expressed mostly on the adaxial side and only in guard cells on the abaxial side.

The protein resides in the cytoplasm. It localises to the nucleus. It carries out the reaction a (2R,3R)-dihydroflavonol + 2-oxoglutarate + O2 = a flavonol + succinate + CO2 + H2O. It catalyses the reaction a (2S)-flavan-4-one + 2-oxoglutarate + O2 = a (2R,3R)-dihydroflavonol + succinate + CO2. It functions in the pathway secondary metabolite biosynthesis; flavonoid biosynthesis. Its function is as follows. Catalyzes the formation of flavonols from dihydroflavonols. It can act on dihydrokaempferol to produce kaempferol, on dihydroquercetin to produce quercitin and on dihydromyricetin to produce myricetin. In vitro catalyzes the oxidation of both enantiomers of naringenin to give both cis- and trans-dihydrokaempferol. This Arabidopsis thaliana (Mouse-ear cress) protein is Flavonol synthase/flavanone 3-hydroxylase (FLS1).